The following is a 637-amino-acid chain: Nuclear receptor-binding protein homolog (637 aa).

A compositionally biased stretch (polar residues) spans 1–14; sequence MSNSQANAGISGST. Disordered stretches follow at residues 1-60 and 74-99; these read MSNS…TADA and SEGV…ILEE. The span at 36–46 shows a compositional bias: low complexity; it reads PAATPPSQSTQ. Acidic residues predominate over residues 88-98; sequence DDSEDESEILE. One can recognise a Protein kinase domain in the interval 109–375; it reads REEVDQRDVP…ANDLLFHPLL (267 aa). Disordered stretches follow at residues 465–489 and 617–637; these read PNFR…EPVD and PQEQ…TTSN. Ser-473, Ser-479, and Ser-482 each carry phosphoserine. Thr-484 carries the phosphothreonine modification.

The protein belongs to the protein kinase superfamily. Ser/Thr protein kinase family.

It localises to the cytoplasm. The protein localises to the cell cortex. May play a role in subcellular trafficking between the endoplasmic reticulum and Golgi apparatus. This is Nuclear receptor-binding protein homolog from Drosophila melanogaster (Fruit fly).